Here is a 71-residue protein sequence, read N- to C-terminus: MRKSFYSWLMTQRNPKSNEPVAILADYAFDETTFPKHSSDFETVSRYLEDEASFSFNLTDFDDIWEDYLNH.

Belongs to the UPF0346 family.

This Streptococcus agalactiae serotype Ia (strain ATCC 27591 / A909 / CDC SS700) protein is UPF0346 protein SAK_1533.